Consider the following 406-residue polypeptide: Cysteine desulfurase (406 aa).

K226 is modified (N6-(pyridoxal phosphate)lysine). C364 acts as the Cysteine persulfide intermediate in catalysis.

This sequence belongs to the class-V pyridoxal-phosphate-dependent aminotransferase family. Csd subfamily. As to quaternary structure, homodimer. Interacts with SufE and the SufBCD complex composed of SufB, SufC and SufD. The interaction with SufE is required to mediate the direct transfer of the sulfur atom from the S-sulfanylcysteine. Pyridoxal 5'-phosphate serves as cofactor.

Its subcellular location is the cytoplasm. It carries out the reaction (sulfur carrier)-H + L-cysteine = (sulfur carrier)-SH + L-alanine. The enzyme catalyses L-selenocysteine + AH2 = hydrogenselenide + L-alanine + A + H(+). The protein operates within cofactor biosynthesis; iron-sulfur cluster biosynthesis. In terms of biological role, cysteine desulfurases mobilize the sulfur from L-cysteine to yield L-alanine, an essential step in sulfur metabolism for biosynthesis of a variety of sulfur-containing biomolecules. Component of the suf operon, which is activated and required under specific conditions such as oxidative stress and iron limitation. Acts as a potent selenocysteine lyase in vitro, that mobilizes selenium from L-selenocysteine. Selenocysteine lyase activity is however unsure in vivo. This is Cysteine desulfurase from Yersinia pseudotuberculosis serotype IB (strain PB1/+).